Consider the following 89-residue polypeptide: Phosphocarrier protein HPr (89 aa).

Positions 1–88 (MLKQSIEIIN…DLINGYFGEG (88 aa)) constitute an HPr domain. Residue histidine 15 is the Pros-phosphohistidine intermediate of the active site. Phosphoserine; by HPrK/P is present on serine 46.

This sequence belongs to the HPr family.

It localises to the cytoplasm. With respect to regulation, phosphorylation on Ser-46 inhibits the phosphoryl transfer from enzyme I to HPr. Functionally, general (non sugar-specific) component of the phosphoenolpyruvate-dependent sugar phosphotransferase system (sugar PTS). This major carbohydrate active-transport system catalyzes the phosphorylation of incoming sugar substrates concomitantly with their translocation across the cell membrane. The phosphoryl group from phosphoenolpyruvate (PEP) is transferred to the phosphoryl carrier protein HPr by enzyme I. Phospho-HPr then transfers it to the PTS EIIA domain. The protein is Phosphocarrier protein HPr (ptsH) of Neisseria meningitidis serogroup A / serotype 4A (strain DSM 15465 / Z2491).